Here is a 228-residue protein sequence, read N- to C-terminus: Glyceraldehyde 3-phosphate phosphatase (228 aa).

It belongs to the HAD-like hydrolase superfamily. Requires Mg(2+) as cofactor.

Its function is as follows. Catalyzes the dephosphorylation of D,L-glyceraldehyde 3-phosphate in vitro. In Methanocaldococcus jannaschii (strain ATCC 43067 / DSM 2661 / JAL-1 / JCM 10045 / NBRC 100440) (Methanococcus jannaschii), this protein is Glyceraldehyde 3-phosphate phosphatase.